The chain runs to 236 residues: Orotidine 5'-phosphate decarboxylase (236 aa).

Substrate is bound by residues aspartate 12, lysine 34, 60-69 (DLKLHDIPHT), threonine 123, arginine 184, glutamine 193, glycine 213, and arginine 214. The Proton donor role is filled by lysine 62.

The protein belongs to the OMP decarboxylase family. Type 1 subfamily. Homodimer.

It catalyses the reaction orotidine 5'-phosphate + H(+) = UMP + CO2. It participates in pyrimidine metabolism; UMP biosynthesis via de novo pathway; UMP from orotate: step 2/2. Functionally, catalyzes the decarboxylation of orotidine 5'-monophosphate (OMP) to uridine 5'-monophosphate (UMP). This chain is Orotidine 5'-phosphate decarboxylase, found in Gluconobacter oxydans (strain 621H) (Gluconobacter suboxydans).